A 223-amino-acid chain; its full sequence is All-trans retinoic acid-induced differentiation factor (223 aa).

The first 25 residues, 1–25 (MASRESGGSRAAALLLVLGVERALA), serve as a signal peptide directing secretion. The Extracellular segment spans residues 26–193 (LPEICTLCPG…YKCMRQGSFS (168 aa)). The EGF-like domain occupies 146 to 187 (QRDLCNSTGSPEMCPENGSCASDGPGLLQCVCADGFHGYKCM). 3 disulfide bridges follow: cysteine 150–cysteine 165, cysteine 159–cysteine 175, and cysteine 177–cysteine 186. A helical transmembrane segment spans residues 194 to 214 (LLMFFGILGSTTLAISILLWG). The Cytoplasmic portion of the chain corresponds to 215 to 223 (TQRRKAKAS).

In terms of assembly, interacts with NELL1; the interaction promotes osteoblastic differentiation and mineralization. Interacts with SLC37A3; the interaction is direct and both proteins are mutually dependent for their stability.

It localises to the nucleus envelope. Its subcellular location is the cell membrane. The protein resides in the lysosome membrane. In terms of biological role, promotes osteoblast cell differentiation and terminal mineralization. Plays a role in inducing the cell cycle arrest via inhibiting CCND1 expression in all-trans-retinoic acid (ATRA) signal pathway. In osteoclasts, forms a transporter complex with ATRAID for nitrogen-containing-bisphophonates (N-BPs) required for releasing N-BP molecules that have trafficked to lysosomes through fluid-phase endocytosis into the cytosol. The sequence is that of All-trans retinoic acid-induced differentiation factor (Atraid) from Mus musculus (Mouse).